Here is a 217-residue protein sequence, read N- to C-terminus: Cytidylate kinase (217 aa).

10–18 (GPAGAGKST) contacts ATP.

It belongs to the cytidylate kinase family. Type 1 subfamily.

It is found in the cytoplasm. It carries out the reaction CMP + ATP = CDP + ADP. The enzyme catalyses dCMP + ATP = dCDP + ADP. This is Cytidylate kinase from Clostridium botulinum (strain Langeland / NCTC 10281 / Type F).